A 2068-amino-acid polypeptide reads, in one-letter code: uncharacterized protein (2068 aa).

2 helical membrane passes run Phe3 to Ser23 and Thr51 to Ile71. Positions Gln975–Gln998 are enriched in basic and acidic residues. The interval Gln975–Val1030 is disordered. Residues Glu999–Gln1018 show a composition bias toward acidic residues. Residues Phe1890–Tyr1910 form a helical membrane-spanning segment.

The protein localises to the membrane. This is an uncharacterized protein from Plasmodium falciparum (isolate 3D7).